We begin with the raw amino-acid sequence, 236 residues long: Large ribosomal subunit protein uL2 (236 aa).

Residues 198-236 form a disordered region; sequence DHPFGGGGRQHPGRPKTVSRGTPPGRKVGSIAARRTGKR.

Belongs to the universal ribosomal protein uL2 family. Part of the 50S ribosomal subunit. Forms a bridge to the 30S subunit in the 70S ribosome.

Its function is as follows. One of the primary rRNA binding proteins. Required for association of the 30S and 50S subunits to form the 70S ribosome, for tRNA binding and peptide bond formation. It has been suggested to have peptidyltransferase activity; this is somewhat controversial. Makes several contacts with the 16S rRNA in the 70S ribosome. In Methanothrix thermoacetophila (strain DSM 6194 / JCM 14653 / NBRC 101360 / PT) (Methanosaeta thermophila), this protein is Large ribosomal subunit protein uL2.